Here is a 1356-residue protein sequence, read N- to C-terminus: MAQSFTGKKRIRKSFGRIPEAVQMPNLIEVQRSSYEQFLQRETRPGLRRDEGVEAVFKSVFPIKDFNERAVLEYVSYEFEEPKYDVEECIQRDMTFAAPLKVKLRLIVFETEEETGARSVKDIKEQDVYMGDIPLMTDKGTFIVNGTERVIVSQMHRSPGVFFDHDKGKTHASGKLLFAARVIPYRGSWLDFEFDAKDIVYVRIDRRRKLPATTFLYALGMDGEEILTTFYDVVPFEKRSGGWATPYKPERWRGVKPEFPLVDADTGEEVAPAGTKITARQAKKFADGGLKTLLLAPEALTGRYLARDAVNMATGEIYAEAGDELDVTSIQALADQGFSTIDVLDIDHVTVGAYMRNTLRVDKNAIREDALFDIYRVMRPGEPPTVEAAEAMFKSLFFDAERYDLSSVGRVKMNMRLEQDVSDEVRILRKEDVLAVLKVLVGLRDGRGEIDDIDNLGNRRVRSVGELLENQYRVGLLRMERAIKERMSSVDIDTVMPHDLINAKPAAAAVREFFGSSQLSQFMDQTNPLSEITHKRRLSALGPGGLTRERAGFEVRDVHPTHYGRICPIETPEGPNIGLINSLATHARVNKYGFIESPYRRVKDGKPQDEVVYMSAMEESKHVIAQSNIKVAEGEIVEDLVPGRINGEPTLLQKETVDLMDVSPRQVVSVAAALIPFLENDDANRALMGSNMQRQAVPLVQSDAPLVGTGMEAVVARDSGAVVIAKRTGVVEQIDGTRIVIRATEETDPARSGVDIYRMSKFQRSNQSTCINQRPLVKVGDRIVAGDIIADGPSTELGELALGRNALVAFMPWNGYNFEDSILISERIVRDDVFTSIHIEEFEVMARDTKLGPEEITRDIPNVGEEALRNLDEAGIVAIGAEVQPGDILVGKVTPKGESPMTPEEKLLRAIFGEKASDVRDTSLRLPPGVAGTIVDVRVFNRHGVDKDERALAIERAEIDRLGKDRDDEFAILNRNISGRLKELLIGKVALSGPKGLSRGEITAEGLAQVASGLWWQIALEDEKAMGELESLRRLFDENRKRLDRRFEDKVDKLQRGDELPPGVMKMVKVFVAVKRKLQPGDKMAGRHGNKGVISRILPIEDMPFLADGTHVDVVLNPLGVPSRMNVGQIFETHLGWACANLGKQITNLLEDWQQGGQKQALVERLTEIYGPDEELPDTEEGLVELARNLGKGVPIATPVFDGARMDDIEGHLEMAGVNKSGQSILFDGLTGEQFKRPVTVGYIYMLKLHHLVDDKIHARSIGPYSLVTQQPLGGKAQFGGQRFGEMEVWALEAYGAAYTLQEMLTVKSDDVAGRTKVYESIVRGDDTFEAGIPESFNVLVKEMRSLGLNVELENS.

Belongs to the RNA polymerase beta chain family. The RNAP catalytic core consists of 2 alpha, 1 beta, 1 beta' and 1 omega subunit. When a sigma factor is associated with the core the holoenzyme is formed, which can initiate transcription.

The enzyme catalyses RNA(n) + a ribonucleoside 5'-triphosphate = RNA(n+1) + diphosphate. Functionally, DNA-dependent RNA polymerase catalyzes the transcription of DNA into RNA using the four ribonucleoside triphosphates as substrates. The protein is DNA-directed RNA polymerase subunit beta of Caulobacter vibrioides (strain ATCC 19089 / CIP 103742 / CB 15) (Caulobacter crescentus).